Here is a 556-residue protein sequence, read N- to C-terminus: (6-4)DNA photolyase (556 aa).

One can recognise a Photolyase/cryptochrome alpha/beta domain in the interval 24–162 (SGSLIWFRKG…EVFSPVSHTL (139 aa)). Glu262 contributes to the phosphate binding site. FAD is bound by residues Lys263, 276 to 280 (TTVMS), 317 to 321 (QLLWR), 380 to 383 (WMHH), Arg386, 415 to 417 (DSD), and Asn421. Residue Trp320 coordinates DNA. An interaction with DNA region spans residues 382 to 387 (HHLARH). Position 427 (Trp427) interacts with DNA. The segment at 534 to 556 (LRRKLQKDEHEESKIRNQRPKLK) is disordered. Basic and acidic residues predominate over residues 539-548 (QKDEHEESKI).

Belongs to the DNA photolyase class-1 family. The cofactor is FAD. In terms of tissue distribution, expressed in siliques, flowers and leaves. Not detected in roots.

The enzyme catalyses (6-4) photoproduct (in DNA) = 2 pyrimidine residues (in DNA).. Involved in repair of UV radiation-induced DNA damage. Catalyzes the photoreactivation of pyrimidine [6-4] pyrimidone photoproduct (6-4 products). Binds specifically to DNA containing 6-4 products and repairs these lesions in a visible light-dependent manner. Not required for repair of cyclobutane pyrimidine dimer (CPD). This Arabidopsis thaliana (Mouse-ear cress) protein is (6-4)DNA photolyase (UVR3).